The following is a 267-amino-acid chain: Apolipoprotein A-I (267 aa).

An N-terminal signal peptide occupies residues 1-18 (MKATVLTLAVLFLTGSQA). Tandem repeats lie at residues 68 to 89 (LKLL…EQLG) and 90 to 111 (PVTQ…QEMS). Positions 68 to 267 (LKLLDNWDSV…EEYTKKLSTQ (200 aa)) are 10 X approximate tandem repeats. At methionine 110 the chain carries Methionine sulfoxide. The 3; half-length repeat unit spans residues 112–122 (KDLEEVKAKVQ). 5 repeat units span residues 123–144 (PYLD…QKVE), 145–166 (PLRA…EKLS), 167–188 (PLGE…THLA), 189–210 (PYSD…ENGG), and 211–232 (ARLA…EKAK). Methionine 136 bears the Methionine sulfoxide mark. Residues 233 to 243 (PALEDLRQGLL) form a 9; half-length repeat. Residues 244 to 267 (PVLESFKVSFLSALEEYTKKLSTQ) form repeat 10.

This sequence belongs to the apolipoprotein A1/A4/E family. In terms of assembly, homodimer. Interacts with APOA1BP and CLU. Component of a sperm activating protein complex (SPAP), consisting of APOA1, an immunoglobulin heavy chain, an immunoglobulin light chain and albumin. Interacts with NDRG1. Interacts with SCGB3A2. Interacts with NAXE and YJEFN3. Post-translationally, glycosylated. In terms of processing, palmitoylated. Phosphorylation sites are present in the extracellular medium. In terms of tissue distribution, major protein of plasma HDL, also found in chylomicrons.

The protein localises to the secreted. In terms of biological role, participates in the reverse transport of cholesterol from tissues to the liver for excretion by promoting cholesterol efflux from tissues and by acting as a cofactor for the lecithin cholesterol acyltransferase (LCAT). As part of the SPAP complex, activates spermatozoa motility. This is Apolipoprotein A-I (APOA1) from Papio hamadryas (Hamadryas baboon).